A 1007-amino-acid polypeptide reads, in one-letter code: Protein vav-1 (1007 aa).

A Calponin-homology (CH) domain is found at 37 to 151; that stretch reads CDLWIGCARW…TLSFLSHTKE (115 aa). Residues 151 to 239 form an AC region; the sequence is ESLSRGVDPF…ENDLQNTPTL (89 aa). Residues 153-176 form a disordered region; it reads LSRGVDPFPDTDNNQEGTSNGSEF. A compositionally biased stretch (polar residues) spans 163-174; the sequence is TDNNQEGTSNGS. Residues Tyr-183, Tyr-200, and Tyr-217 each carry the phosphotyrosine modification. Residues 240–437 form the DH domain; it reads KRNRCIRELY…EDVCNYINEE (198 aa). A PH domain is found at 470 to 598; sequence RVNLDGEVKM…WMTALLLSKS (129 aa). The Phorbol-ester/DAG-type zinc finger occupies 610–664; it reads NHKVAFHSFRVDVKNPATCDVCDKLMKGLQYQGYKCESCNMSMHKECLGLKKCEA. Residues 688-750 form the SH3 1 domain; it reads HEGDIVVANS…HLDHVSQSRT (63 aa). The tract at residues 778–817 is disordered; it reads LPNKLLSDGSSRSLSGPHGSRSSRNSSSSTINGSMDSVPR. Residues 782-814 are compositionally biased toward low complexity; the sequence is LLSDGSSRSLSGPHGSRSSRNSSSSTINGSMDS. The 95-residue stretch at 831–925 folds into the SH2 domain; that stretch reads WYMGEMERAK…ALDTCLKNPY (95 aa). The SH3 2 domain maps to 926–991; it reads SQCKVFKAVH…PLSYVKPYDP (66 aa).

GEF activity is regulated by phosphorylation on tyrosine residues. In terms of tissue distribution, strong expression in the pharynx, proximal gonad, spermatheca, intestine and rectal epithelia.

Functionally, acts as a guanine nucleotide exchange factor (GEF) for Rho GTPase. Has a critical roles in the generation of rhythmic behaviors: feeding, defecation and ovulation by dynamically regulating the concentration of intracellular calcium. Plays a role in male tail tip morphogenesis. The sequence is that of Protein vav-1 from Caenorhabditis elegans.